The primary structure comprises 209 residues: Uracil phosphoribosyltransferase (209 aa).

5-phospho-alpha-D-ribose 1-diphosphate contacts are provided by residues arginine 79, arginine 104, and 131 to 139; that span reads DPMLATGGS. Residues isoleucine 194 and 199-201 each bind uracil; that span reads GDA. Residue aspartate 200 coordinates 5-phospho-alpha-D-ribose 1-diphosphate.

Belongs to the UPRTase family. The cofactor is Mg(2+).

It carries out the reaction UMP + diphosphate = 5-phospho-alpha-D-ribose 1-diphosphate + uracil. The protein operates within pyrimidine metabolism; UMP biosynthesis via salvage pathway; UMP from uracil: step 1/1. With respect to regulation, allosterically activated by GTP. Functionally, catalyzes the conversion of uracil and 5-phospho-alpha-D-ribose 1-diphosphate (PRPP) to UMP and diphosphate. In Desulfitobacterium hafniense (strain DSM 10664 / DCB-2), this protein is Uracil phosphoribosyltransferase.